A 568-amino-acid polypeptide reads, in one-letter code: Small ribosomal subunit protein bS1 (568 aa).

S1 motif domains follow at residues 39-100 (KTVV…LSRE), 118-184 (GEFV…VSRR), 205-273 (GMVL…LGIK), 290-360 (GKQM…LSIK), 377-447 (GTII…LGIK), and 464-533 (GTIV…LSVK).

This sequence belongs to the bacterial ribosomal protein bS1 family.

Its function is as follows. Binds mRNA; thus facilitating recognition of the initiation point. It is needed to translate mRNA with a short Shine-Dalgarno (SD) purine-rich sequence. In Rickettsia conorii (strain ATCC VR-613 / Malish 7), this protein is Small ribosomal subunit protein bS1 (rpsA).